We begin with the raw amino-acid sequence, 145 residues long: 3-hydroxyacyl-[acyl-carrier-protein] dehydratase FabZ (145 aa).

Residue H49 is part of the active site.

It belongs to the thioester dehydratase family. FabZ subfamily.

The protein resides in the cytoplasm. It carries out the reaction a (3R)-hydroxyacyl-[ACP] = a (2E)-enoyl-[ACP] + H2O. Involved in unsaturated fatty acids biosynthesis. Catalyzes the dehydration of short chain beta-hydroxyacyl-ACPs and long chain saturated and unsaturated beta-hydroxyacyl-ACPs. The protein is 3-hydroxyacyl-[acyl-carrier-protein] dehydratase FabZ of Rickettsia bellii (strain RML369-C).